A 306-amino-acid polypeptide reads, in one-letter code: S-methyl-5'-thioadenosine phosphorylase (306 aa).

Phosphate is bound by residues Thr-21, 63-64 (RH), and 96-97 (SA). Met-198 serves as a coordination point for substrate. Residue Ser-199 participates in phosphate binding. 222 to 224 (DYD) is a substrate binding site.

It belongs to the PNP/MTAP phosphorylase family. MTAP subfamily. Homotrimer.

It is found in the cytoplasm. Its subcellular location is the nucleus. It carries out the reaction S-methyl-5'-thioadenosine + phosphate = 5-(methylsulfanyl)-alpha-D-ribose 1-phosphate + adenine. It participates in amino-acid biosynthesis; L-methionine biosynthesis via salvage pathway; S-methyl-5-thio-alpha-D-ribose 1-phosphate from S-methyl-5'-thioadenosine (phosphorylase route): step 1/1. Catalyzes the reversible phosphorylation of S-methyl-5'-thioadenosine (MTA) to adenine and 5-methylthioribose-1-phosphate. Involved in the breakdown of MTA, a major by-product of polyamine biosynthesis. Responsible for the first step in the methionine salvage pathway after MTA has been generated from S-adenosylmethionine. Has broad substrate specificity with 6-aminopurine nucleosides as preferred substrates. This Sclerotinia sclerotiorum (strain ATCC 18683 / 1980 / Ss-1) (White mold) protein is S-methyl-5'-thioadenosine phosphorylase.